The primary structure comprises 620 residues: 1-deoxy-D-xylulose-5-phosphate synthase (620 aa).

Thiamine diphosphate is bound by residues H80 and 121-123; that span reads GHS. D152 is a binding site for Mg(2+). Thiamine diphosphate contacts are provided by residues 153–154, N181, Y288, and E370; that span reads GA. N181 contributes to the Mg(2+) binding site.

Belongs to the transketolase family. DXPS subfamily. As to quaternary structure, homodimer. Requires Mg(2+) as cofactor. Thiamine diphosphate serves as cofactor.

The enzyme catalyses D-glyceraldehyde 3-phosphate + pyruvate + H(+) = 1-deoxy-D-xylulose 5-phosphate + CO2. It participates in metabolic intermediate biosynthesis; 1-deoxy-D-xylulose 5-phosphate biosynthesis; 1-deoxy-D-xylulose 5-phosphate from D-glyceraldehyde 3-phosphate and pyruvate: step 1/1. Functionally, catalyzes the acyloin condensation reaction between C atoms 2 and 3 of pyruvate and glyceraldehyde 3-phosphate to yield 1-deoxy-D-xylulose-5-phosphate (DXP). This Escherichia coli (strain 55989 / EAEC) protein is 1-deoxy-D-xylulose-5-phosphate synthase.